A 1149-amino-acid polypeptide reads, in one-letter code: ATP-dependent helicase/deoxyribonuclease subunit B (1149 aa).

The UvrD-like helicase ATP-binding domain maps to 1-276 (MAIRYIFGRA…INLDIEERKV (276 aa)). 8–15 (GRAGRGKS) is an ATP binding site. One can recognise a UvrD-like helicase C-terminal domain in the interval 273-586 (ERKVLPKEKE…LVGSIERSKS (314 aa)). The [4Fe-4S] cluster site is built by Cys786, Cys1105, Cys1108, and Cys1114.

This sequence belongs to the helicase family. AddB/RexB type 1 subfamily. As to quaternary structure, heterodimer of AddA and AddB. Mg(2+) is required as a cofactor. The cofactor is [4Fe-4S] cluster.

Its function is as follows. The heterodimer acts as both an ATP-dependent DNA helicase and an ATP-dependent, dual-direction single-stranded exonuclease. Recognizes the chi site generating a DNA molecule suitable for the initiation of homologous recombination. The AddB subunit has 5' -&gt; 3' nuclease activity but not helicase activity. This Alkaliphilus metalliredigens (strain QYMF) protein is ATP-dependent helicase/deoxyribonuclease subunit B.